Consider the following 521-residue polypeptide: Protein disulfide-isomerase A5 (521 aa).

Positions methionine 1–serine 25 are cleaved as a signal peptide. Thioredoxin domains lie at phenylalanine 136–proline 263, alanine 274–serine 386, and proline 387–glutamate 508. Cystine bridges form between cysteine 184–cysteine 187, cysteine 307–cysteine 310, and cysteine 428–cysteine 431. The Prevents secretion from ER signature appears at lysine 518–leucine 521.

This sequence belongs to the protein disulfide isomerase family.

The protein resides in the endoplasmic reticulum lumen. It carries out the reaction Catalyzes the rearrangement of -S-S- bonds in proteins.. The chain is Protein disulfide-isomerase A5 (PDIA5) from Bos taurus (Bovine).